The chain runs to 123 residues: Large ribosomal subunit protein uL14 (123 aa).

The protein belongs to the universal ribosomal protein uL14 family. As to quaternary structure, part of the 50S ribosomal subunit. Forms a cluster with proteins L3 and L19. In the 70S ribosome, L14 and L19 interact and together make contacts with the 16S rRNA in bridges B5 and B8.

In terms of biological role, binds to 23S rRNA. Forms part of two intersubunit bridges in the 70S ribosome. The sequence is that of Large ribosomal subunit protein uL14 from Actinobacillus succinogenes (strain ATCC 55618 / DSM 22257 / CCUG 43843 / 130Z).